Reading from the N-terminus, the 157-residue chain is Large ribosomal subunit protein bL17 (157 aa).

The disordered stretch occupies residues 124–157 (AAPVVSKQDRAKRVKGSKKAESRSQENEGGDAAE).

It belongs to the bacterial ribosomal protein bL17 family. As to quaternary structure, part of the 50S ribosomal subunit. Contacts protein L32.

This chain is Large ribosomal subunit protein bL17, found in Chlorobaculum tepidum (strain ATCC 49652 / DSM 12025 / NBRC 103806 / TLS) (Chlorobium tepidum).